The primary structure comprises 131 residues: Glycine cleavage system H protein (131 aa).

Residues 24–106 (RVTVGISDHA…YGEGWIFVVE (83 aa)) enclose the Lipoyl-binding domain. At K65 the chain carries N6-lipoyllysine.

This sequence belongs to the GcvH family. In terms of assembly, the glycine cleavage system is composed of four proteins: P, T, L and H. It depends on (R)-lipoate as a cofactor.

Its function is as follows. The glycine cleavage system catalyzes the degradation of glycine. The H protein shuttles the methylamine group of glycine from the P protein to the T protein. This chain is Glycine cleavage system H protein, found in Xanthomonas euvesicatoria pv. vesicatoria (strain 85-10) (Xanthomonas campestris pv. vesicatoria).